A 280-amino-acid chain; its full sequence is Small ribosomal subunit protein uS3 (280 aa).

The 69-residue stretch at 38–106 (IRKLLATGLE…QVQLNILEVK (69 aa)) folds into the KH type-2 domain. Positions 216–280 (AAAPAADRPR…SAGQPETTES (65 aa)) are disordered. The segment covering 237–270 (SGASGTTATSTDAGRAASEGTVEAPATEAAATAP) has biased composition (low complexity).

The protein belongs to the universal ribosomal protein uS3 family. Part of the 30S ribosomal subunit. Forms a tight complex with proteins S10 and S14.

Its function is as follows. Binds the lower part of the 30S subunit head. Binds mRNA in the 70S ribosome, positioning it for translation. This is Small ribosomal subunit protein uS3 from Mycolicibacterium vanbaalenii (strain DSM 7251 / JCM 13017 / BCRC 16820 / KCTC 9966 / NRRL B-24157 / PYR-1) (Mycobacterium vanbaalenii).